We begin with the raw amino-acid sequence, 422 residues long: Vitamin D3 receptor B (422 aa).

The segment at residues Pro-20–Thr-95 is a DNA-binding region (nuclear receptor). Residues Cys-23, Cys-26, Cys-40, Cys-43, Cys-59, Cys-65, Cys-75, and Cys-78 each contribute to the Zn(2+) site. 2 NR C4-type zinc fingers span residues Cys-23–Cys-43 and Cys-59–Cys-78. The segment at Asp-96–Asp-125 is hinge. Residues Ile-106 to Arg-128 form a disordered region. The 293-residue stretch at Glu-126–Gly-418 folds into the NR LBD domain. Position 142 (Tyr-142) interacts with calcitriol. The disordered stretch occupies residues Ser-145 to Asp-190. Residues Arg-163–Ser-185 are compositionally biased toward low complexity. Ser-234 contributes to the calcitriol binding site. The tract at residues Lys-243–Lys-261 is interaction with coactivator LXXLL motif. Calcitriol contacts are provided by Arg-271, Ser-275, His-302, and His-392. The 9aaTAD motif lies at Pro-411–Gly-419.

Belongs to the nuclear hormone receptor family. Homodimer in the absence of bound vitamin D3. Heterodimer with RXRA after vitamin D3 binding. Interacts with ncoa1 and possibly other coactivators, leading to a strong increase of transcription of target genes. In terms of tissue distribution, detected in embryo 24 to 48 hours after fertilization, and in intestinal bulb.

It is found in the nucleus. The protein localises to the cytoplasm. Nuclear receptor for calcitriol, the active form of vitamin D3 which mediates the action of this vitamin on cells. Enters the nucleus upon vitamin D3 binding where it forms heterodimers with the retinoid X receptor/RXR. The VDR-RXR heterodimers bind to specific response elements on DNA and activate the transcription of vitamin D3-responsive target genes. Recruited to promoters via its interaction with BAZ1B/WSTF which mediates the interaction with acetylated histones, an essential step for VDR-promoter association. Plays a central role in calcium homeostasis. The polypeptide is Vitamin D3 receptor B (vdrb) (Danio rerio (Zebrafish)).